The primary structure comprises 209 residues: Uracil phosphoribosyltransferase (209 aa).

5-phospho-alpha-D-ribose 1-diphosphate contacts are provided by residues R79, R104, and 131 to 139; that span reads DPMLATGGS. Uracil contacts are provided by residues I194 and 199-201; that span reads GDA. Position 200 (D200) interacts with 5-phospho-alpha-D-ribose 1-diphosphate.

This sequence belongs to the UPRTase family. Mg(2+) is required as a cofactor.

It catalyses the reaction UMP + diphosphate = 5-phospho-alpha-D-ribose 1-diphosphate + uracil. The protein operates within pyrimidine metabolism; UMP biosynthesis via salvage pathway; UMP from uracil: step 1/1. With respect to regulation, allosterically activated by GTP. Its function is as follows. Catalyzes the conversion of uracil and 5-phospho-alpha-D-ribose 1-diphosphate (PRPP) to UMP and diphosphate. This Lysinibacillus sphaericus (strain C3-41) protein is Uracil phosphoribosyltransferase.